Here is a 727-residue protein sequence, read N- to C-terminus: MLRIPVKRALIGLSKSPKGYVRSTGTAASNLIEVFVDGQSVMVEPGTTVLQACEKVGMQIPRFCYHERLSVAGNCRMCLVEIEKAPKVVAACAMPVMKGWNILTNSEKSKKAREGVMEFLLANHPLDCPICDQGGECDLQDQSMMFGSDRSRFLEGKRAVEDKNIGPLVKTIMTRCIQCTRCIRFASEIAGVDDLGTTGRGNDMQVGTYIEKMFMSELSGNIIDICPVGALTSKPYAFTARPWETRKTESIDVMDAVGSNIVVSTRTGEVMRILPRMHEDINEEWISDKTRFAYDGLKRQRLTEPMVRNEKGLLTYTSWEDALSRVAGMLQSFEGKAVAAIAGGLVDAEALVALKDLLNKVDSDTLCTEEIFPNEGAGTDLRSNYLLNTTIAGVEEADVVLLVGTNPRFEAPLFNARIRKSWLHNDLKVALIGSPVDLTYRYDHLGDSPKILQDIASGNHEFSKVLNAAKKPMVVLGSSALQRDDGAAILAAVSSIAQKIRVASGAAAEWKVMNILHRIASQVAALDLGYKPGVEAIRKNPPKLLFLLGADGGCITRQDLPKDCFIVYQGHHGDVGAPIADVILPGAAYTEKSATYVNTEGRAQQTKVAVTPPGLAREDWKIIRALSEIAGITLPYDTLDQVRNRLGEVSPNLVRYDDVEEANYFQQASELAKLVDQEFLADPLVPPQLTIKDFYMTDSISRASQTMAKCVKAVTEGAQAVEEPSIC.

Residues 1–23 constitute a mitochondrion transit peptide; that stretch reads MLRIPVKRALIGLSKSPKGYVRS. In terms of domain architecture, 2Fe-2S ferredoxin-type spans 30 to 108; sequence NLIEVFVDGQ…GWNILTNSEK (79 aa). [2Fe-2S] cluster contacts are provided by Cys-64, Cys-75, and Cys-78. Position 84 is an N6-acetyllysine (Lys-84). Cys-92 lines the [2Fe-2S] cluster pocket. Residues 108–147 form the 4Fe-4S His(Cys)3-ligated-type domain; the sequence is KSKKAREGVMEFLLANHPLDCPICDQGGECDLQDQSMMFG. [4Fe-4S] cluster contacts are provided by His-124, Cys-128, Cys-131, Cys-137, Cys-176, Cys-179, Cys-182, and Cys-226. Positions 245–301 constitute a 4Fe-4S Mo/W bis-MGD-type domain; the sequence is TRKTESIDVMDAVGSNIVVSTRTGEVMRILPRMHEDINEEWISDKTRFAYDGLKRQR. Lys-499 and Lys-709 each carry N6-acetyllysine.

It belongs to the complex I 75 kDa subunit family. As to quaternary structure, core subunit of respiratory chain NADH dehydrogenase (Complex I) which is composed of 45 different subunits. This is the largest subunit of complex I and it is a component of the iron-sulfur (IP) fragment of the enzyme. Complex I associates with ubiquinol-cytochrome reductase complex (Complex III) to form supercomplexes. Interacts with MDM2 and AKAP1. The cofactor is [2Fe-2S] cluster. [4Fe-4S] cluster serves as cofactor.

The protein resides in the mitochondrion inner membrane. It carries out the reaction a ubiquinone + NADH + 5 H(+)(in) = a ubiquinol + NAD(+) + 4 H(+)(out). Its function is as follows. Core subunit of the mitochondrial membrane respiratory chain NADH dehydrogenase (Complex I) which catalyzes electron transfer from NADH through the respiratory chain, using ubiquinone as an electron acceptor. Essential for catalysing the entry and efficient transfer of electrons within complex I. Plays a key role in the assembly and stability of complex I and participates in the association of complex I with ubiquinol-cytochrome reductase complex (Complex III) to form supercomplexes. This chain is NADH-ubiquinone oxidoreductase 75 kDa subunit, mitochondrial (Ndufs1), found in Rattus norvegicus (Rat).